The chain runs to 290 residues: Glutamate 5-kinase (290 aa).

An ATP-binding site is contributed by Lys-21. Positions 60, 151, and 163 each coordinate substrate. 217-223 (TGGMFTK) is an ATP binding site.

Belongs to the glutamate 5-kinase family.

Its subcellular location is the cytoplasm. It carries out the reaction L-glutamate + ATP = L-glutamyl 5-phosphate + ADP. It functions in the pathway amino-acid biosynthesis; L-proline biosynthesis; L-glutamate 5-semialdehyde from L-glutamate: step 1/2. Functionally, catalyzes the transfer of a phosphate group to glutamate to form L-glutamate 5-phosphate. The chain is Glutamate 5-kinase from Leptospira interrogans serogroup Icterohaemorrhagiae serovar copenhageni (strain Fiocruz L1-130).